The sequence spans 160 residues: Serine-protein kinase RsbW (160 aa).

This sequence belongs to the anti-sigma-factor family.

It catalyses the reaction L-seryl-[protein] + ATP = O-phospho-L-seryl-[protein] + ADP + H(+). The catalysed reaction is L-threonyl-[protein] + ATP = O-phospho-L-threonyl-[protein] + ADP + H(+). Negative regulator of sigma-B activity. Phosphorylates and inactivates its specific antagonist protein, RsbV. Upon phosphorylation of RsbV, RsbW is released and binds to sigma-B, thereby blocking its ability to form an RNA polymerase holoenzyme (E-sigma-B). This Bacillus cereus (strain ZK / E33L) protein is Serine-protein kinase RsbW.